Here is a 345-residue protein sequence, read N- to C-terminus: Alkaline phosphatase isozyme conversion protein (345 aa).

The N-terminal stretch at 1 to 24 (MFSALRHRTAALALGVCFILPVHA) is a signal peptide. 4 residues coordinate Zn(2+): H117, D143, E176, and D204.

Belongs to the peptidase M28 family. M28C subfamily.

In terms of biological role, this protein, presumably an aminopeptidase, mediates the conversion of E.coli alkaline phosphatase isozyme 1, to isozymes 2 and 3 by removing, one by one, the two N-terminal arginine residues. This Escherichia coli (strain K12) protein is Alkaline phosphatase isozyme conversion protein (iap).